The following is a 319-amino-acid chain: Ferrochelatase (319 aa).

2 residues coordinate Fe cation: histidine 192 and glutamate 271.

Belongs to the ferrochelatase family.

Its subcellular location is the cytoplasm. It catalyses the reaction heme b + 2 H(+) = protoporphyrin IX + Fe(2+). It functions in the pathway porphyrin-containing compound metabolism; protoheme biosynthesis; protoheme from protoporphyrin-IX: step 1/1. In terms of biological role, catalyzes the ferrous insertion into protoporphyrin IX. This chain is Ferrochelatase, found in Geotalea uraniireducens (strain Rf4) (Geobacter uraniireducens).